Consider the following 263-residue polypeptide: Proteasome subunit alpha (263 aa).

Positions Ala-229–Ser-263 are disordered.

Belongs to the peptidase T1A family. The 20S proteasome core is composed of 14 alpha and 14 beta subunits that assemble into four stacked heptameric rings, resulting in a barrel-shaped structure. The two inner rings, each composed of seven catalytic beta subunits, are sandwiched by two outer rings, each composed of seven alpha subunits. The catalytic chamber with the active sites is on the inside of the barrel. Has a gated structure, the ends of the cylinder being occluded by the N-termini of the alpha-subunits. Is capped by the proteasome-associated ATPase, ARC.

Its subcellular location is the cytoplasm. The protein operates within protein degradation; proteasomal Pup-dependent pathway. With respect to regulation, the formation of the proteasomal ATPase ARC-20S proteasome complex, likely via the docking of the C-termini of ARC into the intersubunit pockets in the alpha-rings, may trigger opening of the gate for substrate entry. Interconversion between the open-gate and close-gate conformations leads to a dynamic regulation of the 20S proteasome proteolysis activity. In terms of biological role, component of the proteasome core, a large protease complex with broad specificity involved in protein degradation. This Actinosynnema mirum (strain ATCC 29888 / DSM 43827 / JCM 3225 / NBRC 14064 / NCIMB 13271 / NRRL B-12336 / IMRU 3971 / 101) protein is Proteasome subunit alpha.